The primary structure comprises 448 residues: Trk system potassium uptake protein TrkA homolog 2 (448 aa).

An RCK N-terminal 1 domain is found at 1-124; sequence MKAVVIGAGE…RAQVGVDIMI (124 aa). NAD(+) is bound by residues 7 to 11, Glu29, 70 to 71, and Arg101; these read GAGEV and TG. An RCK C-terminal 1 domain is found at 144-225; sequence IDAEMFAGGK…MADLENVFGN (82 aa). Residues 230–348 form the RCK N-terminal 2 domain; the sequence is RNRILLIGCG…FEMVGIDIAV (119 aa). 232-262 contacts NAD(+); sequence RILLIGCGIVGFYLAKIIDKDENADLKVIEY. In terms of domain architecture, RCK C-terminal 2 spans 368-448; sequence EALATIEGEK…AVRSVEKLFK (81 aa).

Functionally, part of a potassium transport system. The polypeptide is Trk system potassium uptake protein TrkA homolog 2 (trkA2) (Methanosarcina mazei (strain ATCC BAA-159 / DSM 3647 / Goe1 / Go1 / JCM 11833 / OCM 88) (Methanosarcina frisia)).